The following is a 319-amino-acid chain: 4-hydroxy-3-methylbut-2-enyl diphosphate reductase (319 aa).

Position 15 (C15) interacts with [4Fe-4S] cluster. (2E)-4-hydroxy-3-methylbut-2-enyl diphosphate contacts are provided by H44 and H77. The dimethylallyl diphosphate site is built by H44 and H77. Residues H44 and H77 each contribute to the isopentenyl diphosphate site. C99 serves as a coordination point for [4Fe-4S] cluster. A (2E)-4-hydroxy-3-methylbut-2-enyl diphosphate-binding site is contributed by H127. H127 is a dimethylallyl diphosphate binding site. H127 is an isopentenyl diphosphate binding site. Catalysis depends on E129, which acts as the Proton donor. A (2E)-4-hydroxy-3-methylbut-2-enyl diphosphate-binding site is contributed by T172. Residue C202 participates in [4Fe-4S] cluster binding. Residues S230, S231, N232, and S274 each coordinate (2E)-4-hydroxy-3-methylbut-2-enyl diphosphate. Residues S230, S231, N232, and S274 each contribute to the dimethylallyl diphosphate site. Isopentenyl diphosphate-binding residues include S230, S231, N232, and S274.

This sequence belongs to the IspH family. Requires [4Fe-4S] cluster as cofactor.

It carries out the reaction isopentenyl diphosphate + 2 oxidized [2Fe-2S]-[ferredoxin] + H2O = (2E)-4-hydroxy-3-methylbut-2-enyl diphosphate + 2 reduced [2Fe-2S]-[ferredoxin] + 2 H(+). It catalyses the reaction dimethylallyl diphosphate + 2 oxidized [2Fe-2S]-[ferredoxin] + H2O = (2E)-4-hydroxy-3-methylbut-2-enyl diphosphate + 2 reduced [2Fe-2S]-[ferredoxin] + 2 H(+). It functions in the pathway isoprenoid biosynthesis; dimethylallyl diphosphate biosynthesis; dimethylallyl diphosphate from (2E)-4-hydroxy-3-methylbutenyl diphosphate: step 1/1. It participates in isoprenoid biosynthesis; isopentenyl diphosphate biosynthesis via DXP pathway; isopentenyl diphosphate from 1-deoxy-D-xylulose 5-phosphate: step 6/6. Its function is as follows. Catalyzes the conversion of 1-hydroxy-2-methyl-2-(E)-butenyl 4-diphosphate (HMBPP) into a mixture of isopentenyl diphosphate (IPP) and dimethylallyl diphosphate (DMAPP). Acts in the terminal step of the DOXP/MEP pathway for isoprenoid precursor biosynthesis. The sequence is that of 4-hydroxy-3-methylbut-2-enyl diphosphate reductase from Xanthomonas euvesicatoria pv. vesicatoria (strain 85-10) (Xanthomonas campestris pv. vesicatoria).